A 159-amino-acid chain; its full sequence is Lipoprotein signal peptidase (159 aa).

A run of 2 helical transmembrane segments spans residues 64-84 and 89-109; these read SVQW…IWVV and PPFW…GNGI. Catalysis depends on residues D119 and D135. Residues 130–150 form a helical membrane-spanning segment; it reads IFNPADIAINLAVLCFLVDLW.

Belongs to the peptidase A8 family.

It localises to the cell inner membrane. It catalyses the reaction Release of signal peptides from bacterial membrane prolipoproteins. Hydrolyzes -Xaa-Yaa-Zaa-|-(S,diacylglyceryl)Cys-, in which Xaa is hydrophobic (preferably Leu), and Yaa (Ala or Ser) and Zaa (Gly or Ala) have small, neutral side chains.. Its pathway is protein modification; lipoprotein biosynthesis (signal peptide cleavage). Its function is as follows. This protein specifically catalyzes the removal of signal peptides from prolipoproteins. In Parasynechococcus marenigrum (strain WH8102), this protein is Lipoprotein signal peptidase.